The primary structure comprises 350 residues: Putative deoxyribonuclease-2 (350 aa).

Belongs to the DNase II family.

This is Putative deoxyribonuclease-2 from Burkholderia thailandensis (strain ATCC 700388 / DSM 13276 / CCUG 48851 / CIP 106301 / E264).